Consider the following 588-residue polypeptide: Solute carrier family 2, facilitated glucose transporter member 12 (588 aa).

The Cytoplasmic segment spans residues 1–28 (MLAHSTAQDLILQQRSSDDHPQTNPRQT). The chain crosses the membrane as a helical span at residues 29-49 (GCGAFIILSSVIAAISGLLVG). Topologically, residues 50-74 (YELGIISGALLQLQSLLELTCQQQE) are extracellular. A helical membrane pass occupies residues 75 to 95 (IVVSALLIGALVASLVGGCLI). The Cytoplasmic portion of the chain corresponds to 96-103 (DLYGRRTT). Residues 104–124 (IIFTSILLVFANLLPVVVVSY) traverse the membrane as a helical segment. At 125–131 (GSLIAGR) the chain is on the extracellular side. A helical membrane pass occupies residues 132–152 (IFIGVSISLSAIATCVYIAEL). The Cytoplasmic segment spans residues 153-158 (SPQDKR). Residues 159–179 (GMLVSLNELMIVAGILLAYIC) traverse the membrane as a helical segment. The Extracellular segment spans residues 180-191 (NYLFASVNNGWK). The helical transmembrane segment at 192–212 (YMFGLITPLAALQAVAMFFLP) threads the bilayer. The Cytoplasmic segment spans residues 213–272 (RSPRFLIMKGYDDAAGKVLQKLRATTDINEELTAIKSSIKAEYQYKFLDLFCSRDNMRAR). Residues 273-293 (LLIGLTLSFFVQITGQPNILF) traverse the membrane as a helical segment. Topologically, residues 294-311 (YASTVLKSVGFQSTEAAS) are extracellular. The chain crosses the membrane as a helical span at residues 312–332 (LASTGIGVVKVVSTIPAIFLV). Over 333–339 (DKIGSKT) the chain is Cytoplasmic. The helical transmembrane segment at 340-360 (FLCIGSAVMAVSLVSVGLVSL) threads the bilayer. At 361-459 (QLDVNYNNIC…IPEYMKWLCL (99 aa)) the chain is on the extracellular side. N-linked (GlcNAc...) asparagine glycans are attached at residues N377, N395, and N419. A helical membrane pass occupies residues 460 to 480 (SSLLAFVAAFSIGLGPMAWLV). The Cytoplasmic segment spans residues 481 to 492 (QSEIFPAGIKGR). The helical transmembrane segment at 493-513 (AFAITSSMNWGMNLLISLTFL) threads the bilayer. At 514–522 (TLTEMIGLP) the chain is on the extracellular side. Residues 523–543 (WMLFGYALMSIASLVFVIMFV) form a helical membrane-spanning segment. Topologically, residues 544 to 588 (PNTKGRPLEEISKELANRSYMCNAVCHRRRSKKKLTPVALIQSPA) are cytoplasmic.

It belongs to the major facilitator superfamily. Sugar transporter (TC 2.A.1.1) family. Glucose transporter subfamily.

Its subcellular location is the cell membrane. The protein localises to the endomembrane system. It is found in the cytoplasm. The protein resides in the perinuclear region. The enzyme catalyses D-glucose(out) = D-glucose(in). In terms of biological role, insulin-regulated facilitative glucose transporter. The chain is Solute carrier family 2, facilitated glucose transporter member 12 from Xenopus laevis (African clawed frog).